The primary structure comprises 88 residues: Putative septation protein SpoVG (88 aa).

Belongs to the SpoVG family.

In terms of biological role, could be involved in septation. The polypeptide is Putative septation protein SpoVG (Desulforudis audaxviator (strain MP104C)).